The chain runs to 359 residues: GDSL esterase/lipase At2g30310 (359 aa).

The signal sequence occupies residues 1-28 (MSTSKTIVFGLFVATLLVSCNVAANATT). The Nucleophile role is filled by Ser41. 2 N-linked (GlcNAc...) asparagine glycosylation sites follow: Asn103 and Asn325. Active-site residues include Asp333 and His336.

Belongs to the 'GDSL' lipolytic enzyme family.

It is found in the secreted. This Arabidopsis thaliana (Mouse-ear cress) protein is GDSL esterase/lipase At2g30310.